The primary structure comprises 280 residues: MIPTGAAFVAGVTGDPIAHSLSPVVMRHWIDAAGIDALYAPFPISAGNFDRVVRGLAGAGCRGLNVTLPHKEAALELARTASGPARAVGAANLLTFTPAGIHADNTDIAGFLYALAPANVEFRKARALIFGAGGAARAMLYALLTVGVTDVAICNRNITRAQGLSRDIAPDAGIIPWEARDDALQGRDLIINATSLGLAGRDELALDWQRVRPGSVAFDGIYIPVNTRFIVESRARGVTAIDGLDMLIGQARPSFEAFFGRPAPDLPDMRSRLLEHLGAR.

Residues 20-22 and threonine 67 contribute to the shikimate site; that span reads SLS. The active-site Proton acceptor is lysine 71. Residues asparagine 92 and aspartate 107 each coordinate shikimate. NADP(+) contacts are provided by residues 131–135 and glycine 220; that span reads GAGGA. Shikimate is bound at residue tyrosine 222. Glycine 243 contacts NADP(+).

This sequence belongs to the shikimate dehydrogenase family. In terms of assembly, homodimer.

It catalyses the reaction shikimate + NADP(+) = 3-dehydroshikimate + NADPH + H(+). It functions in the pathway metabolic intermediate biosynthesis; chorismate biosynthesis; chorismate from D-erythrose 4-phosphate and phosphoenolpyruvate: step 4/7. Functionally, involved in the biosynthesis of the chorismate, which leads to the biosynthesis of aromatic amino acids. Catalyzes the reversible NADPH linked reduction of 3-dehydroshikimate (DHSA) to yield shikimate (SA). The sequence is that of Shikimate dehydrogenase (NADP(+)) from Maricaulis maris (strain MCS10) (Caulobacter maris).